Reading from the N-terminus, the 413-residue chain is Multifunctional CCA protein (413 aa).

ATP contacts are provided by Gly-8 and Arg-11. CTP contacts are provided by Gly-8 and Arg-11. Residues Asp-21 and Asp-23 each coordinate Mg(2+). Residues Arg-91, Arg-143, and Arg-146 each contribute to the ATP site. The CTP site is built by Arg-91, Arg-143, and Arg-146. Residues 232–333 enclose the HD domain; sequence TGVHVMMVVD…VRFFERSDAL (102 aa).

It belongs to the tRNA nucleotidyltransferase/poly(A) polymerase family. Bacterial CCA-adding enzyme type 1 subfamily. Monomer. Can also form homodimers and oligomers. It depends on Mg(2+) as a cofactor. Requires Ni(2+) as cofactor.

It catalyses the reaction a tRNA precursor + 2 CTP + ATP = a tRNA with a 3' CCA end + 3 diphosphate. The enzyme catalyses a tRNA with a 3' CCA end + 2 CTP + ATP = a tRNA with a 3' CCACCA end + 3 diphosphate. Catalyzes the addition and repair of the essential 3'-terminal CCA sequence in tRNAs without using a nucleic acid template. Adds these three nucleotides in the order of C, C, and A to the tRNA nucleotide-73, using CTP and ATP as substrates and producing inorganic pyrophosphate. tRNA 3'-terminal CCA addition is required both for tRNA processing and repair. Also involved in tRNA surveillance by mediating tandem CCA addition to generate a CCACCA at the 3' terminus of unstable tRNAs. While stable tRNAs receive only 3'-terminal CCA, unstable tRNAs are marked with CCACCA and rapidly degraded. This is Multifunctional CCA protein from Burkholderia ambifaria (strain MC40-6).